Here is a 1546-residue protein sequence, read N- to C-terminus: Lysophospholipase NTE1 (1546 aa).

Over 1 to 45 (MKDSTEALNSIAFAVDTTLSSILPSSLAPPSAPPATSSFLKSIWY) the chain is Cytoplasmic. A helical transmembrane segment spans residues 46-66 (AFWWLWSMVVFKIMNIILLYI). Over 67 to 81 (PSKIMNALSINFEIT) the chain is Lumenal. A helical membrane pass occupies residues 82–102 (LNLSSILVALSAIITVCFLVV). Topologically, residues 103–1546 (RYKYLTGYSK…KKVLYRRNSI (1444 aa)) are cytoplasmic. A nucleoside 3',5'-cyclic phosphate contacts are provided by residues 689 to 820 (PTEF…LKKL) and 816 to 965 (KLKK…VASK). Residues 1239-1403 (LVLGGGGSRG…LDNLPVSEMK (165 aa)) form the PNPLA domain. The short motif at 1243–1248 (GGGSRG) is the GXGXXG element. Residues 1270–1274 (GTSIG) carry the GXSXG motif. Catalysis depends on serine 1272, which acts as the Nucleophile. The active-site Proton acceptor is aspartate 1390. Residues 1390–1392 (DGG) carry the DGA/G motif.

It belongs to the NTE family.

The protein localises to the endoplasmic reticulum membrane. It catalyses the reaction a 1-acyl-sn-glycero-3-phosphocholine + H2O = sn-glycerol 3-phosphocholine + a fatty acid + H(+). With respect to regulation, inhibited by organophosphorus esters. Functionally, intracellular phospholipase B that catalyzes the double deacylation of phosphatidylcholine (PC) to glycerophosphocholine (GroPCho). Plays an important role in membrane lipid homeostasis. Responsible for the rapid PC turnover in response to inositol, elevated temperatures, or when choline is present in the growth medium. This is Lysophospholipase NTE1 (NTE1) from Scheffersomyces stipitis (strain ATCC 58785 / CBS 6054 / NBRC 10063 / NRRL Y-11545) (Yeast).